The chain runs to 83 residues: Apolipoprotein C-I, acidic form (83 aa).

An N-terminal signal peptide occupies residues 1–26 (MRLFLSLPVLVVVLSMVLEGPAPAQG).

It belongs to the apolipoprotein C1 family.

It localises to the secreted. The polypeptide is Apolipoprotein C-I, acidic form (APOC1A) (Pan troglodytes (Chimpanzee)).